The chain runs to 511 residues: RNA-splicing ligase RtcB homolog (511 aa).

Positions 125, 128, 233, 265, and 359 each coordinate Mn(2+). 232–236 (NHYAE) contributes to the GMP binding site. Residues 359–360 (HN), 408–411 (GGTM), Ser-415, 434–437 (HGAG), and Lys-510 each bind GMP. The active-site GMP-histidine intermediate is His-434.

It belongs to the RtcB family. In terms of assembly, catalytic component of the tRNA-splicing ligase complex. Requires Mn(2+) as cofactor.

It catalyses the reaction a 3'-end 3'-phospho-ribonucleotide-RNA + a 5'-end dephospho-ribonucleoside-RNA + GTP = a ribonucleotidyl-ribonucleotide-RNA + GMP + diphosphate. It carries out the reaction a 3'-end 2',3'-cyclophospho-ribonucleotide-RNA + a 5'-end dephospho-ribonucleoside-RNA + GTP + H2O = a ribonucleotidyl-ribonucleotide-RNA + GMP + diphosphate + H(+). Functionally, catalytic subunit of the tRNA-splicing ligase complex that acts by directly joining spliced tRNA halves to mature-sized tRNAs by incorporating the precursor-derived splice junction phosphate into the mature tRNA as a canonical 3',5'-phosphodiester. May act as an RNA ligase with broad substrate specificity, and may function toward other RNAs. The sequence is that of RNA-splicing ligase RtcB homolog from Plasmodium knowlesi (strain H).